The sequence spans 883 residues: Leucine--tRNA ligase (883 aa).

The short motif at 43–53 (PYPSGRIHIGH) is the 'HIGH' region element. Positions 630–634 (KMSKS) match the 'KMSKS' region motif. Lysine 633 contacts ATP.

The protein belongs to the class-I aminoacyl-tRNA synthetase family.

Its subcellular location is the cytoplasm. It catalyses the reaction tRNA(Leu) + L-leucine + ATP = L-leucyl-tRNA(Leu) + AMP + diphosphate. The polypeptide is Leucine--tRNA ligase (Nitrobacter winogradskyi (strain ATCC 25391 / DSM 10237 / CIP 104748 / NCIMB 11846 / Nb-255)).